A 112-amino-acid polypeptide reads, in one-letter code: UPF0060 membrane protein SCO3297 (112 aa).

4 consecutive transmembrane segments (helical) span residues 8-28 (ALFV…WQGV), 33-53 (GWLW…VATF), 62-82 (ILAA…VVAD), and 88-108 (RWDI…MWAP).

Belongs to the UPF0060 family.

It localises to the cell membrane. The sequence is that of UPF0060 membrane protein SCO3297 from Streptomyces coelicolor (strain ATCC BAA-471 / A3(2) / M145).